We begin with the raw amino-acid sequence, 89 residues long: Small ribosomal subunit protein uS15 (89 aa).

Belongs to the universal ribosomal protein uS15 family. In terms of assembly, part of the 30S ribosomal subunit. Forms a bridge to the 50S subunit in the 70S ribosome, contacting the 23S rRNA.

Functionally, one of the primary rRNA binding proteins, it binds directly to 16S rRNA where it helps nucleate assembly of the platform of the 30S subunit by binding and bridging several RNA helices of the 16S rRNA. Forms an intersubunit bridge (bridge B4) with the 23S rRNA of the 50S subunit in the ribosome. The polypeptide is Small ribosomal subunit protein uS15 (Ectopseudomonas mendocina (strain ymp) (Pseudomonas mendocina)).